We begin with the raw amino-acid sequence, 241 residues long: Spiralin (241 aa).

A signal peptide spans 1-23 (MKKLLSILAVFGVSAVGTTSVVA). The N-palmitoyl cysteine moiety is linked to residue Cys-24. The S-diacylglycerol cysteine moiety is linked to residue Cys-24.

It belongs to the spiralin family. Seems to occur as dimer, tetramers, and large oligomers of identical chains. Palmitate and stearate are the major lipid components.

It is found in the cell membrane. Its function is as follows. Major membrane protein of spiroplasma. The sequence is that of Spiralin (spi) from Spiroplasma citri.